The primary structure comprises 357 residues: Cobalt-precorrin-5B C(1)-methyltransferase (357 aa).

The protein belongs to the CbiD family.

It catalyses the reaction Co-precorrin-5B + S-adenosyl-L-methionine = Co-precorrin-6A + S-adenosyl-L-homocysteine. It participates in cofactor biosynthesis; adenosylcobalamin biosynthesis; cob(II)yrinate a,c-diamide from sirohydrochlorin (anaerobic route): step 6/10. Functionally, catalyzes the methylation of C-1 in cobalt-precorrin-5B to form cobalt-precorrin-6A. The chain is Cobalt-precorrin-5B C(1)-methyltransferase from Gloeobacter violaceus (strain ATCC 29082 / PCC 7421).